Consider the following 166-residue polypeptide: NAD(P)H-quinone oxidoreductase subunit I, chloroplastic (166 aa).

4Fe-4S ferredoxin-type domains lie at 55-84 and 95-124; these read GRIHFEFDKCIACEVCVRVCPIDLPVVDWK and LNYSIDFGICIFCGNCVEYCPTNCLSMTEE. Positions 64, 67, 70, 74, 104, 107, 110, and 114 each coordinate [4Fe-4S] cluster.

The protein belongs to the complex I 23 kDa subunit family. As to quaternary structure, NDH is composed of at least 16 different subunits, 5 of which are encoded in the nucleus. Requires [4Fe-4S] cluster as cofactor.

The protein resides in the plastid. Its subcellular location is the chloroplast thylakoid membrane. The enzyme catalyses a plastoquinone + NADH + (n+1) H(+)(in) = a plastoquinol + NAD(+) + n H(+)(out). It carries out the reaction a plastoquinone + NADPH + (n+1) H(+)(in) = a plastoquinol + NADP(+) + n H(+)(out). Its function is as follows. NDH shuttles electrons from NAD(P)H:plastoquinone, via FMN and iron-sulfur (Fe-S) centers, to quinones in the photosynthetic chain and possibly in a chloroplast respiratory chain. The immediate electron acceptor for the enzyme in this species is believed to be plastoquinone. Couples the redox reaction to proton translocation, and thus conserves the redox energy in a proton gradient. The sequence is that of NAD(P)H-quinone oxidoreductase subunit I, chloroplastic from Oblivia mikanioides (Salmea mikanioides).